A 302-amino-acid chain; its full sequence is 1,2-dihydroxynaphthalene dioxygenase (302 aa).

2 VOC domains span residues 9–124 and 149–270; these read ELGY…IFWG and GLGH…PGWR. Residue His152 participates in Fe cation binding. Substrate-binding positions include His152, 199–200, His215, and Tyr256; that span reads DH. Position 215 (His215) interacts with Fe cation. A Fe cation-binding site is contributed by Glu266.

It belongs to the extradiol ring-cleavage dioxygenase family. Fe(2+) is required as a cofactor.

The enzyme catalyses naphthalene-1,2-diol + O2 = 2-hydroxychromene-2-carboxylate + H(+). The protein operates within aromatic compound metabolism; naphthalene degradation. With respect to regulation, inhibited by bathophenanthroline sulfonate, o-phenanthroline, 8-hydroxyquinoline, 2,2'-dipyridyl and p-chlormercuribenzoate. Also inhibited by Hg(2+), Cu(2+), Co(2+) and Fe(3+) ions. Functionally, involved in the naphthalene catabolic pathway. Catalyzes the meta-cleavage of 1,2-dihydroxynaphthalene (1,2-DHN) to yield 2-hydroxychromene-2-carboxylic acid. Can also cleave 3-methylcatechol and 4-methylcatechol. The chain is 1,2-dihydroxynaphthalene dioxygenase (nahC) from Pseudomonas putida (Arthrobacter siderocapsulatus).